Reading from the N-terminus, the 295-residue chain is UDP-3-O-acyl-N-acetylglucosamine deacetylase (295 aa).

Zn(2+) is bound by residues histidine 75, histidine 232, and aspartate 236. Residue histidine 259 is the Proton donor of the active site.

Belongs to the LpxC family. Requires Zn(2+) as cofactor.

The catalysed reaction is a UDP-3-O-[(3R)-3-hydroxyacyl]-N-acetyl-alpha-D-glucosamine + H2O = a UDP-3-O-[(3R)-3-hydroxyacyl]-alpha-D-glucosamine + acetate. It functions in the pathway glycolipid biosynthesis; lipid IV(A) biosynthesis; lipid IV(A) from (3R)-3-hydroxytetradecanoyl-[acyl-carrier-protein] and UDP-N-acetyl-alpha-D-glucosamine: step 2/6. Functionally, catalyzes the hydrolysis of UDP-3-O-myristoyl-N-acetylglucosamine to form UDP-3-O-myristoylglucosamine and acetate, the committed step in lipid A biosynthesis. In Helicobacter pylori (strain ATCC 700392 / 26695) (Campylobacter pylori), this protein is UDP-3-O-acyl-N-acetylglucosamine deacetylase.